The primary structure comprises 240 residues: Orotidine 5'-phosphate decarboxylase (240 aa).

Residues Asp-15, Lys-37, 64–73 (DLKYHDIPNT), Thr-125, Arg-186, Gln-195, Gly-215, and Arg-216 contribute to the substrate site. The Proton donor role is filled by Lys-66.

It belongs to the OMP decarboxylase family. Type 1 subfamily. In terms of assembly, homodimer.

It carries out the reaction orotidine 5'-phosphate + H(+) = UMP + CO2. The protein operates within pyrimidine metabolism; UMP biosynthesis via de novo pathway; UMP from orotate: step 2/2. Functionally, catalyzes the decarboxylation of orotidine 5'-monophosphate (OMP) to uridine 5'-monophosphate (UMP). This is Orotidine 5'-phosphate decarboxylase from Pelobacter propionicus (strain DSM 2379 / NBRC 103807 / OttBd1).